Consider the following 143-residue polypeptide: Potassium voltage-gated channel subfamily E regulatory beta subunit 5 (143 aa).

N-linked (GlcNAc...) asparagine glycans are attached at residues Asn2 and Asn25. The chain crosses the membrane as a helical span at residues 61-81; sequence LYILLIMIFYACLAGGLILAY. At 82–143 the chain is on the cytoplasmic side; it reads TRSRKLVEAK…PALAQGAERV (62 aa).

The protein belongs to the potassium channel KCNE family. In terms of assembly, interacts with KCNQ1; impairs KCNQ1 localization in lipid rafts and only conducts current upon strong and continued depolarization. In terms of tissue distribution, detected in embryonal dorsal root and nerve ganglia, in the somites and in myoepicardial layer of the developing heart wall. Detected at lower levels in the central nervous system (CNS) and in developing limb.

It localises to the membrane. Its function is as follows. Potassium channel ancillary subunit that is essential for generation of some native K(+) currents by virtue of formation of heteromeric ion channel complex with voltage-gated potassium (Kv) channel pore-forming alpha subunits. Functions as an inhibitory beta-subunit of the repolarizing cardiac potassium ion channel KCNQ1. In Mus musculus (Mouse), this protein is Potassium voltage-gated channel subfamily E regulatory beta subunit 5 (Kcne5).